Consider the following 511-residue polypeptide: Maturase K (511 aa).

This sequence belongs to the intron maturase 2 family. MatK subfamily.

The protein resides in the plastid. Its subcellular location is the chloroplast. In terms of biological role, usually encoded in the trnK tRNA gene intron. Probably assists in splicing its own and other chloroplast group II introns. The protein is Maturase K of Hordeum murinum subsp. leporinum (Mouse barley).